A 217-amino-acid chain; its full sequence is Probable transaldolase (217 aa).

K83 acts as the Schiff-base intermediate with substrate in catalysis.

Belongs to the transaldolase family. Type 3B subfamily.

It localises to the cytoplasm. The catalysed reaction is D-sedoheptulose 7-phosphate + D-glyceraldehyde 3-phosphate = D-erythrose 4-phosphate + beta-D-fructose 6-phosphate. It functions in the pathway carbohydrate degradation; pentose phosphate pathway; D-glyceraldehyde 3-phosphate and beta-D-fructose 6-phosphate from D-ribose 5-phosphate and D-xylulose 5-phosphate (non-oxidative stage): step 2/3. In terms of biological role, transaldolase is important for the balance of metabolites in the pentose-phosphate pathway. The chain is Probable transaldolase from Ruegeria sp. (strain TM1040) (Silicibacter sp.).